The sequence spans 411 residues: LL-diaminopimelate aminotransferase 1 (411 aa).

Residues Tyr-15 and Gly-42 each contribute to the substrate site. Pyridoxal 5'-phosphate is bound by residues Tyr-72, Ser-108–Lys-109, Tyr-132, Asn-187, Tyr-218, and Ser-246–Ser-248. Positions 109, 132, and 187 each coordinate substrate. Lys-249 carries the N6-(pyridoxal phosphate)lysine modification. The pyridoxal 5'-phosphate site is built by Arg-257 and Asn-292. Substrate-binding residues include Asn-292 and Arg-388.

This sequence belongs to the class-I pyridoxal-phosphate-dependent aminotransferase family. LL-diaminopimelate aminotransferase subfamily. In terms of assembly, homodimer. It depends on pyridoxal 5'-phosphate as a cofactor.

The catalysed reaction is (2S,6S)-2,6-diaminopimelate + 2-oxoglutarate = (S)-2,3,4,5-tetrahydrodipicolinate + L-glutamate + H2O + H(+). Its pathway is amino-acid biosynthesis; L-lysine biosynthesis via DAP pathway; LL-2,6-diaminopimelate from (S)-tetrahydrodipicolinate (aminotransferase route): step 1/1. Functionally, involved in the synthesis of meso-diaminopimelate (m-DAP or DL-DAP), required for both lysine and peptidoglycan biosynthesis. Catalyzes the direct conversion of tetrahydrodipicolinate to LL-diaminopimelate. This Nostoc sp. (strain PCC 7120 / SAG 25.82 / UTEX 2576) protein is LL-diaminopimelate aminotransferase 1.